Here is a 1481-residue protein sequence, read N- to C-terminus: Cystic fibrosis transmembrane conductance regulator (1481 aa).

Over M1–F77 the chain is Cytoplasmic. Residues L78–Q98 traverse the membrane as a helical segment. The region spanning F81–L365 is the ABC transmembrane type-1 1 domain. Topologically, residues P99 to Y122 are extracellular. The chain crosses the membrane as a helical span at residues L123–Q146. Residues H147–L195 are Cytoplasmic-facing. The chain crosses the membrane as a helical span at residues A196–W216. The Extracellular portion of the chain corresponds to D217–S222. A helical membrane pass occupies residues A223–M243. Residues M244–K298 are Cytoplasmic-facing. Residues A299–F319 traverse the membrane as a helical segment. Topologically, residues L320–T339 are extracellular. The helical transmembrane segment at I340–V358 threads the bilayer. The Cytoplasmic segment spans residues Q359 to S859. Residues W401, S435, G459 to T466, and Q494 each bind ATP. One can recognise an ABC transporter 1 domain in the interval N424–G647. C525 is lipidated: S-palmitoyl cysteine. The residue at position 550 (S550) is a Phosphoserine. The segment at S655–E832 is disordered R region. S661 and S671 each carry phosphoserine; by PKA. S687 is modified (phosphoserine; by PKC). A Glycyl lysine isopeptide (Lys-Gly) (interchain with G-Cter in ubiquitin) cross-link involves residue K689. S701 and S713 each carry phosphoserine; by PKA. T718 is modified (phosphothreonine). 4 positions are modified to phosphoserine; by PKA: S738, S769, S796, and S814. The helical transmembrane segment at L860 to V880 threads the bilayer. Residues L860–S1156 enclose the ABC transmembrane type-1 2 domain. The Extracellular portion of the chain corresponds to V881–I919. N895 and N901 each carry an N-linked (GlcNAc...) asparagine glycan. A discontinuously helical transmembrane segment spans residues Y920–H940. The Cytoplasmic portion of the chain corresponds to T941–T991. Residues I992–L1012 traverse the membrane as a helical segment. At Q1013 to P1014 the chain is on the extracellular side. A helical membrane pass occupies residues Y1015–L1035. Topologically, residues H1036–T1096 are cytoplasmic. A helical transmembrane segment spans residues L1097–F1117. Over I1118–G1131 the chain is Extracellular. A helical transmembrane segment spans residues I1132–I1152. Over D1153–L1481 the chain is Cytoplasmic. One can recognise an ABC transporter 2 domain in the interval M1211–S1444. ATP contacts are provided by residues Y1220 and G1245 to S1252. The segment at R1387–L1481 is interaction with GORASP2. A lipid anchor (S-palmitoyl cysteine) is attached at C1396. S1445 and S1457 each carry phosphoserine. Residues H1453–R1462 show a composition bias toward basic residues. Positions H1453–L1481 are disordered. A compositionally biased stretch (acidic residues) spans E1471–L1481. The PDZ-binding signature appears at T1479 to L1481.

The protein belongs to the ABC transporter superfamily. ABCC family. CFTR transporter (TC 3.A.1.202) subfamily. Monomer; does not require oligomerization for channel activity. May form oligomers in the membrane. Interacts with SLC26A3, SLC26A6 and NHERF1. Interacts with SHANK2. Interacts with MYO6. Interacts (via C-terminus) with GOPC (via PDZ domain); this promotes CFTR internalization and thereby decreases channel activity. Interacts with SLC4A7 through NHERF1. Found in a complex with MYO5B and RAB11A. Interacts with ANO1. Interacts with SLC26A8. Interacts with AHCYL1; the interaction increases CFTR activity. Interacts with CSE1L. The core-glycosylated form interacts with GORASP2 (via PDZ GRASP-type 1 domain) in respone to ER stress. Interacts with MARCHF2; the interaction leads to CFTR ubiqtuitination and degradation. Interacts with ADGRG2. In terms of processing, N-glycosylated. Post-translationally, phosphorylated; cAMP treatment promotes phosphorylation and activates the channel. Dephosphorylation decreases the ATPase activity (in vitro). Phosphorylation at PKA sites activates the channel. Phosphorylation at PKC sites enhances the response to phosphorylation by PKA. Phosphorylated by AMPK; this inhibits channel activity. Ubiquitinated, leading to its degradation in the lysosome. Deubiquitination by USP10 in early endosomes enhances its endocytic recycling to the cell membrane. Ubiquitinated by RNF185 during ER stress. Ubiquitinated by MARCHF2.

The protein resides in the apical cell membrane. The protein localises to the early endosome membrane. It localises to the cell membrane. It is found in the recycling endosome membrane. Its subcellular location is the endoplasmic reticulum membrane. The protein resides in the nucleus. The catalysed reaction is ATP + H2O + closed Cl(-) channel = ADP + phosphate + open Cl(-) channel.. The enzyme catalyses chloride(in) = chloride(out). It carries out the reaction hydrogencarbonate(in) = hydrogencarbonate(out). It catalyses the reaction ATP + H2O = ADP + phosphate + H(+). Epithelial ion channel that plays an important role in the regulation of epithelial ion and water transport and fluid homeostasis. Mediates the transport of chloride ions across the cell membrane. Possesses an intrinsic ATPase activity and utilizes ATP to gate its channel; the passive flow of anions through the channel is gated by cycles of ATP binding and hydrolysis by the ATP-binding domains. The ion channel is also permeable to HCO(3)(-); selectivity depends on the extracellular chloride concentration. Exerts its function also by modulating the activity of other ion channels and transporters. Contributes to the regulation of the pH and the ion content of the epithelial fluid layer. Modulates the activity of the epithelial sodium channel (ENaC) complex, in part by regulating the cell surface expression of the ENaC complex. May regulate bicarbonate secretion and salvage in epithelial cells by regulating the transporter SLC4A7. Can inhibit the chloride channel activity of ANO1. Plays a role in the chloride and bicarbonate homeostasis during sperm epididymal maturation and capacitation. The polypeptide is Cystic fibrosis transmembrane conductance regulator (Cavia porcellus (Guinea pig)).